Consider the following 468-residue polypeptide: 6-phospho-beta-galactosidase (468 aa).

Positions 19, 116, 159, 160, and 297 each coordinate D-galactose 6-phosphate. Catalysis depends on Glu-160, which acts as the Proton donor. The active-site Nucleophile is Glu-375. D-galactose 6-phosphate is bound by residues Ser-428, Trp-429, Lys-435, and Tyr-437.

The protein belongs to the glycosyl hydrolase 1 family.

The enzyme catalyses a 6-phospho-beta-D-galactoside + H2O = D-galactose 6-phosphate + an alcohol. It functions in the pathway carbohydrate metabolism; lactose degradation; D-galactose 6-phosphate and beta-D-glucose from lactose 6-phosphate: step 1/1. The polypeptide is 6-phospho-beta-galactosidase (Streptococcus pyogenes serotype M2 (strain MGAS10270)).